Reading from the N-terminus, the 178-residue chain is MRRPFRATPVQKDGPRSNRDIRVPRVQLIDAEGQNHGDVSIQEAIAMAEEAGLDLVEIVPNAEPPVCKIVDLGKLKYQNQKKAAEARKKQKTVEIKEIKMRPNIDTHDYEVKMKAALRFFEEGDKVKVTLRFRGREMAHQELGMKLLQRVKEDTVEIAKVESEPKLEGRQMMMVLAPR.

Residues 1-20 (MRRPFRATPVQKDGPRSNRD) are disordered.

Belongs to the IF-3 family. Monomer.

The protein localises to the cytoplasm. IF-3 binds to the 30S ribosomal subunit and shifts the equilibrium between 70S ribosomes and their 50S and 30S subunits in favor of the free subunits, thus enhancing the availability of 30S subunits on which protein synthesis initiation begins. The protein is Translation initiation factor IF-3 of Brucella anthropi (strain ATCC 49188 / DSM 6882 / CCUG 24695 / JCM 21032 / LMG 3331 / NBRC 15819 / NCTC 12168 / Alc 37) (Ochrobactrum anthropi).